We begin with the raw amino-acid sequence, 363 residues long: GDP-fucose transporter (363 aa).

The next 8 membrane-spanning stretches (helical) occupy residues 30–47, 62–79, 126–148, 152–171, 180–202, 222–244, 251–273, and 307–326; these read VITAVSAYWVFSIGLVFL, FITWYQCLVTVFLCLFLS, VSFYYVGRSLTTVFNVVCTYLIL, TSGQAIGCCALIIFGFLLGV, LSYTGVIFGVLASLSVALNAIYT, LNALVLFLPLMLFNGEFGAVFYF, TFWILMTLGGVFGFMMGYVTGWQ, and LLWWTSNFVVLFGSGMYTYV. The tract at residues 334–363 is disordered; it reads KNSGASPASEAKSDKVKLLGRDGNAAEESV. The segment covering 344–353 has biased composition (basic and acidic residues); sequence AKSDKVKLLG.

This sequence belongs to the TPT transporter family. SLC35C subfamily.

Its subcellular location is the golgi apparatus membrane. Functionally, involved in GDP-fucose import from the cytoplasm into the Golgi lumen. In Caenorhabditis elegans, this protein is GDP-fucose transporter.